The following is a 566-amino-acid chain: Autophagy-related protein 22-1 (566 aa).

Residues 38-58 (YPIAAEVFAVVAVGAFLPVIL) traverse the membrane as a helical segment. Asn-103 is a glycosylation site (N-linked (GlcNAc...) asparagine). 3 consecutive transmembrane segments (helical) span residues 110–130 (SFAM…LVCF), 146–168 (AFAY…VYFL), and 179–199 (SLGC…ANHA). N-linked (GlcNAc...) asparagine glycosylation occurs at Asn-200. A run of 8 helical transmembrane segments spans residues 242-262 (GYGY…LWLF), 278-298 (VILL…LLWL), 351-371 (FLIS…TAVL), 382-402 (IAIA…AFAW), 416-436 (ILLC…LGFI), 451-471 (WEIY…SSYA), 488-510 (FALY…GWLV), and 519-539 (AFIF…MLDV). The tract at residues 547–566 (KAMADGEGRGRGTYERVREE) is disordered.

It belongs to the ATG22 family.

It localises to the vacuole membrane. Functionally, vacuolar effluxer which mediate the efflux of amino acids resulting from autophagic degradation. The release of autophagic amino acids allows the maintenance of protein synthesis and viability during nitrogen starvation. This is Autophagy-related protein 22-1 (ATG22-1) from Phaeosphaeria nodorum (strain SN15 / ATCC MYA-4574 / FGSC 10173) (Glume blotch fungus).